The chain runs to 462 residues: Transactivator/viroplasmin protein (462 aa).

The tract at residues 433–462 (NVSNDEKRSTKSVSSDEINLSAENDGYQHS) is disordered. A compositionally biased stretch (polar residues) spans 443 to 462 (KSVSSDEINLSAENDGYQHS).

It belongs to the caulimoviridae viroplasmin family.

The protein resides in the host cytoplasm. Functionally, enhances the translation of downstream ORFs on polycistronic mRNAs derived from soybean chlorotic mottle virus. The chain is Transactivator/viroplasmin protein from Soybean chlorotic mottle virus.